The following is an 818-amino-acid chain: Rho GTPase-activating protein 44 (818 aa).

The 236-residue stretch at 14–249 (QTVGRAEKTE…IKAQQEAWVE (236 aa)) folds into the BAR domain. Positions 255–445 (KPLEEHLTIS…PIIQHADWFF (191 aa)) constitute a Rho-GAP domain. Disordered regions lie at residues 467-493 (ANYSSMPSPDMDPADRRQPEQARRPLS), 530-772 (SSAG…SMST), and 789-818 (TLRLSPLEHMRRHSVTDKRDSEEESESTAL). Residues 479–489 (PADRRQPEQAR) are compositionally biased toward basic and acidic residues. Ser-493 carries the post-translational modification Phosphoserine. Positions 563–579 (QPLDSPAAPALSPSGLG) are enriched in low complexity. A compositionally biased stretch (polar residues) spans 598 to 611 (GSAQKGSPGSSQGT). Low complexity-rich tracts occupy residues 614–641 (AGTQPGAQPGAQPGASPSPSQPPADQSP) and 688–708 (SPYGLSYPQGYSLASGQLSPA). Positions 731–818 (KPRQRPTLPP…SEEESESTAL (88 aa)) are interaction with BST2. Residues 746–757 (VNLSASSPQSTE) show a composition bias toward polar residues. The PDZ-binding signature appears at 764–767 (MSPG). Residues 794–809 (PLEHMRRHSVTDKRDS) show a composition bias toward basic and acidic residues. A Phosphoserine modification is found at Ser-809. Residues 815–818 (STAL) carry the PDZ-binding motif.

In terms of assembly, interacts with BST2 (via cytoplasmic domain). Interacts (probably via PDZ-binding motif) with SHANK3 (via PDZ domain); the interaction takes place in dendritic spines and promotes GRIA1 exocytosis. As to expression, highly expressed in brain. Expressed at weak level in other tissues.

The protein resides in the cell projection. The protein localises to the dendritic spine. It localises to the recycling endosome. Its subcellular location is the presynapse. It is found in the dendrite. GTPase-activating protein (GAP) that stimulates the GTPase activity of Rho-type GTPases. Thereby, controls Rho-type GTPases cycling between their active GTP-bound and inactive GDP-bound states. Acts as a GAP at least for CDC42 and RAC1. In neurons, is involved in dendritic spine formation and synaptic plasticity in a specific RAC1-GAP activity. Limits the initiation of exploratory dendritic filopodia. Recruited to actin-patches that seed filopodia, binds specifically to plasma membrane sections that are deformed inward by acto-myosin mediated contractile forces. Acts through GAP activity on RAC1 to reduce actin polymerization necessary for filopodia formation. In association with SHANK3, promotes GRIA1 exocytosis from recycling endosomes and spine morphological changes associated to long-term potentiation. The polypeptide is Rho GTPase-activating protein 44 (Homo sapiens (Human)).